A 341-amino-acid chain; its full sequence is tRNA N6-adenosine threonylcarbamoyltransferase (341 aa).

Fe cation contacts are provided by histidine 112 and histidine 116. Substrate contacts are provided by residues 138-142 (TVSGG), aspartate 171, glycine 184, aspartate 188, and asparagine 279. Aspartate 307 lines the Fe cation pocket.

It belongs to the KAE1 / TsaD family. Requires Fe(2+) as cofactor.

The protein localises to the cytoplasm. It carries out the reaction L-threonylcarbamoyladenylate + adenosine(37) in tRNA = N(6)-L-threonylcarbamoyladenosine(37) in tRNA + AMP + H(+). In terms of biological role, required for the formation of a threonylcarbamoyl group on adenosine at position 37 (t(6)A37) in tRNAs that read codons beginning with adenine. Is involved in the transfer of the threonylcarbamoyl moiety of threonylcarbamoyl-AMP (TC-AMP) to the N6 group of A37, together with TsaE and TsaB. TsaD likely plays a direct catalytic role in this reaction. This Riemerella anatipestifer (Moraxella anatipestifer) protein is tRNA N6-adenosine threonylcarbamoyltransferase.